The primary structure comprises 123 residues: Neuropeptide-like peptides nlp-40 (123 aa).

A signal peptide spans 1–17 (MKLVILLSFVATVAVFA). 3 propeptides span residues 30–31 (RA), 66–67 (KR), and 75–76 (KR).

In terms of tissue distribution, expressed in intestinal cells.

It is found in the secreted. The protein localises to the cytoplasmic vesicle. Functionally, neuropeptide ligand for the G-protein coupled receptor aex-2. Activates and regulates the rhythmic calcium influx in DVB GABergic neurons during the defecation motor program, which is a coordinated series of three muscle contractions that occurs every 45 seconds. The sequence is that of Neuropeptide-like peptides nlp-40 from Caenorhabditis elegans.